The sequence spans 173 residues: 16S rRNA aminocarboxypropyltransferase (173 aa).

S-adenosyl-L-methionine-binding residues include Thr25, Leu72, Leu96, and Ser115.

The protein belongs to the TDD superfamily. TSR3 family.

It is found in the cytoplasm. It carries out the reaction an N(1)-methylpseudouridine in rRNA + S-adenosyl-L-methionine = N(1)-methyl-N(3)-[(3S)-3-amino-3-carboxypropyl]pseudouridine in rRNA + S-methyl-5'-thioadenosine + H(+). Its function is as follows. Aminocarboxypropyltransferase that catalyzes the aminocarboxypropyl transfer on pseudouridine corresponding to position 914 in M.jannaschii 16S rRNA. It constitutes the last step in biosynthesis of the hypermodified N1-methyl-N3-(3-amino-3-carboxypropyl) pseudouridine (m1acp3-Psi). The chain is 16S rRNA aminocarboxypropyltransferase from Methanococcoides burtonii (strain DSM 6242 / NBRC 107633 / OCM 468 / ACE-M).